A 435-amino-acid chain; its full sequence is Adenylosuccinate synthetase (435 aa).

GTP-binding positions include 17–23 (GDEGKGK) and 45–47 (GHT). The Proton acceptor role is filled by Asp-18. Asp-18 and Gly-45 together coordinate Mg(2+). IMP is bound by residues 18-21 (DEGK), 43-46 (NAGH), Thr-134, Arg-148, Gln-229, Thr-244, and Arg-308. The Proton donor role is filled by His-46. Substrate is bound at residue 304 to 310 (SVTGRPR). Residues Arg-310, 336–338 (KLD), and 418–420 (STG) each bind GTP.

The protein belongs to the adenylosuccinate synthetase family. In terms of assembly, homodimer. Mg(2+) is required as a cofactor.

Its subcellular location is the cytoplasm. It carries out the reaction IMP + L-aspartate + GTP = N(6)-(1,2-dicarboxyethyl)-AMP + GDP + phosphate + 2 H(+). It functions in the pathway purine metabolism; AMP biosynthesis via de novo pathway; AMP from IMP: step 1/2. In terms of biological role, plays an important role in the de novo pathway of purine nucleotide biosynthesis. Catalyzes the first committed step in the biosynthesis of AMP from IMP. The chain is Adenylosuccinate synthetase from Bordetella parapertussis (strain 12822 / ATCC BAA-587 / NCTC 13253).